A 273-amino-acid chain; its full sequence is Bifunctional protein FolD (273 aa).

NADP(+)-binding positions include 149–151 (GLG) and Val215.

This sequence belongs to the tetrahydrofolate dehydrogenase/cyclohydrolase family. As to quaternary structure, homodimer.

The enzyme catalyses (6R)-5,10-methylene-5,6,7,8-tetrahydrofolate + NADP(+) = (6R)-5,10-methenyltetrahydrofolate + NADPH. It carries out the reaction (6R)-5,10-methenyltetrahydrofolate + H2O = (6R)-10-formyltetrahydrofolate + H(+). The protein operates within one-carbon metabolism; tetrahydrofolate interconversion. Functionally, catalyzes the oxidation of 5,10-methylenetetrahydrofolate to 5,10-methenyltetrahydrofolate and then the hydrolysis of 5,10-methenyltetrahydrofolate to 10-formyltetrahydrofolate. The protein is Bifunctional protein FolD of Mycoplasma genitalium (strain ATCC 33530 / DSM 19775 / NCTC 10195 / G37) (Mycoplasmoides genitalium).